The following is an 88-amino-acid chain: Small ribosomal subunit protein uS15c (88 aa).

It belongs to the universal ribosomal protein uS15 family. In terms of assembly, part of the 30S ribosomal subunit.

Its subcellular location is the plastid. The protein localises to the chloroplast. The polypeptide is Small ribosomal subunit protein uS15c (rps15) (Lobularia maritima (Sweet alyssum)).